A 196-amino-acid chain; its full sequence is Imidazoleglycerol-phosphate dehydratase (196 aa).

This sequence belongs to the imidazoleglycerol-phosphate dehydratase family.

The protein resides in the cytoplasm. The catalysed reaction is D-erythro-1-(imidazol-4-yl)glycerol 3-phosphate = 3-(imidazol-4-yl)-2-oxopropyl phosphate + H2O. The protein operates within amino-acid biosynthesis; L-histidine biosynthesis; L-histidine from 5-phospho-alpha-D-ribose 1-diphosphate: step 6/9. The chain is Imidazoleglycerol-phosphate dehydratase from Dehalococcoides mccartyi (strain ATCC BAA-2266 / KCTC 15142 / 195) (Dehalococcoides ethenogenes (strain 195)).